Here is a 181-residue protein sequence, read N- to C-terminus: Adenine phosphoribosyltransferase (181 aa).

The protein belongs to the purine/pyrimidine phosphoribosyltransferase family. As to quaternary structure, homodimer.

Its subcellular location is the cytoplasm. The enzyme catalyses AMP + diphosphate = 5-phospho-alpha-D-ribose 1-diphosphate + adenine. It participates in purine metabolism; AMP biosynthesis via salvage pathway; AMP from adenine: step 1/1. Catalyzes a salvage reaction resulting in the formation of AMP, that is energically less costly than de novo synthesis. The chain is Adenine phosphoribosyltransferase from Vibrio cholerae serotype O1 (strain ATCC 39541 / Classical Ogawa 395 / O395).